A 252-amino-acid chain; its full sequence is 14-3-3-like protein GF14 omicron (252 aa).

Phosphoserine occurs at positions 65 and 188.

It belongs to the 14-3-3 family.

Its subcellular location is the nucleus. It localises to the cytoplasm. In terms of biological role, is associated with a DNA binding complex that binds to the G box, a well-characterized cis-acting DNA regulatory element found in plant genes. In Arabidopsis thaliana (Mouse-ear cress), this protein is 14-3-3-like protein GF14 omicron (GRF11).